The chain runs to 390 residues: Period circadian protein (390 aa).

Disordered stretches follow at residues 27-120 (VTAP…APPV), 164-188 (LEYS…WEGE), 247-266 (GGNG…STNQ), and 327-356 (SPSG…TSQA). Residues 93–114 (GTSGTGNSGDGGGGGGADGTGS) show a composition bias toward gly residues. Residues 247–256 (GGNGNVGSGN) show a composition bias toward gly residues.

As to quaternary structure, forms a heterodimer with timeless (TIM); the complex then translocates into the nucleus. Phosphorylated with a circadian rhythmicity, probably by the double-time protein (dbt). Phosphorylation could be implicated in the stability of per monomer and in the formation of heterodimer per-tim.

The protein resides in the nucleus. The protein localises to the cytoplasm. Its subcellular location is the perinuclear region. Its function is as follows. Essential for biological clock functions. Determines the period length of circadian and ultradian rhythms; an increase in PER dosage leads to shortened circadian rhythms and a decrease leads to lengthened circadian rhythms. Essential for the circadian rhythmicity of locomotor activity, eclosion behavior, and for the rhythmic component of the male courtship song that originates in the thoracic nervous system. The biological cycle depends on the rhythmic formation and nuclear localization of the TIM-PER complex. Light induces the degradation of TIM, which promotes elimination of PER. Nuclear activity of the heterodimer coordinatively regulates PER and TIM transcription through a negative feedback loop. Behaves as a negative element in circadian transcriptional loop. Does not appear to bind DNA, suggesting indirect transcriptional inhibition. The polypeptide is Period circadian protein (per) (Drosophila tropicalis (Fruit fly)).